We begin with the raw amino-acid sequence, 88 residues long: MKTVLIALLRFYKVAVSPMLGDRCRFYPSCSDYAREAIQYHGAARGTYLAVRRVCRCHPFSAGGIDLVPPPNSDIRARGEADARSHRL.

Belongs to the UPF0161 family.

The protein resides in the cell inner membrane. Functionally, could be involved in insertion of integral membrane proteins into the membrane. This chain is Putative membrane protein insertion efficiency factor, found in Burkholderia vietnamiensis (strain G4 / LMG 22486) (Burkholderia cepacia (strain R1808)).